A 225-amino-acid polypeptide reads, in one-letter code: MSGHDSGNARRGRASFGAFVRKPVERGAAASTGAAAEQGSLEAAQDWPDDAVEVGAVVDAYGLKGWIKVAAHADAGRGGDALLSARRWWLERGAERLSVRILQSKTHGDTVVAQPAGVDDRDAALAMRGFRVFVRREDFPALAADEFYWVDLIGLEVVNEQSVSLGKVSGMIDNGVHSILRVEYPTVGKDGAPATDERLIPFVGVYVKTVDQAARRIVVDWEADY.

Positions 144-225 (ADEFYWVDLI…RIVVDWEADY (82 aa)) constitute a PRC barrel domain.

It belongs to the RimM family. As to quaternary structure, binds ribosomal protein uS19.

It is found in the cytoplasm. Functionally, an accessory protein needed during the final step in the assembly of 30S ribosomal subunit, possibly for assembly of the head region. Essential for efficient processing of 16S rRNA. May be needed both before and after RbfA during the maturation of 16S rRNA. It has affinity for free ribosomal 30S subunits but not for 70S ribosomes. The chain is Ribosome maturation factor RimM from Burkholderia vietnamiensis (strain G4 / LMG 22486) (Burkholderia cepacia (strain R1808)).